A 124-amino-acid chain; its full sequence is Small ribosomal subunit protein uS12 (124 aa).

The tract at residues 8 to 28 is disordered; sequence IRSAREKTDKKTKSPALKSCP. Basic and acidic residues predominate over residues 10-19; that stretch reads SAREKTDKKT. 3-methylthioaspartic acid is present on Asp89.

The protein belongs to the universal ribosomal protein uS12 family. As to quaternary structure, part of the 30S ribosomal subunit. Contacts proteins S8 and S17. May interact with IF1 in the 30S initiation complex.

Its function is as follows. With S4 and S5 plays an important role in translational accuracy. In terms of biological role, interacts with and stabilizes bases of the 16S rRNA that are involved in tRNA selection in the A site and with the mRNA backbone. Located at the interface of the 30S and 50S subunits, it traverses the body of the 30S subunit contacting proteins on the other side and probably holding the rRNA structure together. The combined cluster of proteins S8, S12 and S17 appears to hold together the shoulder and platform of the 30S subunit. The chain is Small ribosomal subunit protein uS12 from Arthrospira platensis (Spirulina platensis).